The primary structure comprises 551 residues: Frizzled-2 (551 aa).

The signal sequence occupies residues 1–26; the sequence is MQGVTRASILLIIYHLFTLSLGQLHG. At 27-231 the chain is on the extracellular side; it reads EKGISVPEHG…FSQDEIRFAR (205 aa). The region spanning 33 to 152 is the FZ domain; sequence PEHGFCQPIS…HGAEQICVGQ (120 aa). 5 disulfide bridges follow: Cys-38-Cys-99, Cys-46-Cys-92, Cys-83-Cys-120, Cys-109-Cys-149, and Cys-113-Cys-137. N-linked (GlcNAc...) asparagine glycosylation is present at Asn-52. N-linked (GlcNAc...) asparagine glycosylation occurs at Asn-153. A helical transmembrane segment spans residues 232–252; that stretch reads IWILIWSVLCCASTFITVTTY. Topologically, residues 253–265 are cytoplasmic; it reads LVDMQRFRYPERP. A helical membrane pass occupies residues 266 to 286; that stretch reads IIFLSGCYTMVSVAYIAGFVL. Over 287–313 the chain is Extracellular; that stretch reads GDKVVCNEGFSEDGYKTVVQGTKKEGC. Residues 314 to 334 traverse the membrane as a helical segment; sequence TILFMMLYFFSMASSIWWVIL. At 335 to 356 the chain is on the cytoplasmic side; it reads SLTWFLAAGMKWGHEAIEANSQ. Residues 357–377 traverse the membrane as a helical segment; that stretch reads YFHLAAWAVPAVKTITILAMG. At 378 to 400 the chain is on the extracellular side; it reads QIDGDLLSGVCFVGLNNIDPLRG. A helical membrane pass occupies residues 401 to 421; that stretch reads FVLAPLFVYLFIGTSFLLAGF. Over 422–447 the chain is Cytoplasmic; it reads VSLFRIRTIMKHDGTKTEKLERLMVR. A helical transmembrane segment spans residues 448–468; that stretch reads IGVFSVLYTVPATIVIACYFY. The Extracellular segment spans residues 469–505; the sequence is EQAFREHWERSWVSQNCKSLAIPCPLQYTPRMTPDFT. Residues 506–526 traverse the membrane as a helical segment; sequence VYMIKYLMTLIVGITSGFWIW. The Cytoplasmic segment spans residues 527-534; it reads SGKTLHSW. Positions 529 to 534 match the Lys-Thr-X-X-X-Trp motif, mediates interaction with the PDZ domain of Dvl family members motif; sequence KTLHSW. Positions 549 to 551 match the PDZ-binding motif; sequence TTV.

Belongs to the G-protein coupled receptor Fz/Smo family. Widely expressed, especially in the eye anlage, otic vesicle and developing somites.

The protein resides in the membrane. It localises to the cell membrane. Functionally, receptor for Wnt proteins. Most of frizzled receptors are coupled to the beta-catenin canonical signaling pathway, which leads to the activation of disheveled proteins, inhibition of GSK-3 kinase, nuclear accumulation of beta-catenin and activation of Wnt target genes. A second signaling pathway involving PKC and calcium fluxes has been seen for some family members, but it is not yet clear if it represents a distinct pathway or if it can be integrated in the canonical pathway, as PKC seems to be required for Wnt-mediated inactivation of GSK-3 kinase. Both pathways seem to involve interactions with G-proteins. May be involved in transduction and intercellular transmission of polarity information during tissue morphogenesis and/or in differentiated tissues. The polypeptide is Frizzled-2 (fzd2) (Xenopus laevis (African clawed frog)).